A 245-amino-acid chain; its full sequence is Tetraspanin-6 (245 aa).

At 1–19 the chain is on the cytoplasmic side; it reads MASPSRRLQTKPVITCFKS. The helical transmembrane segment at 20-40 threads the bilayer; sequence VLLIYTFIFWITGVILLAVGI. Residues 41 to 59 lie on the Extracellular side of the membrane; sequence WGKVSLENYFSLLNEKATN. Residues 60–80 form a helical membrane-spanning segment; it reads VPFVLIGTGTVIILLGTFGCF. Residues 81 to 93 are Cytoplasmic-facing; it reads ATCRASAWMLKLY. A helical transmembrane segment spans residues 94 to 114; the sequence is AMFLTLIFLVELVAAIIGFVF. Residues 115–208 are Extracellular-facing; sequence RHEIKNSLKN…IMVMTIIESE (94 aa). Asn134 carries an N-linked (GlcNAc...) asparagine glycan. A helical transmembrane segment spans residues 209-229; sequence MGVVAGISFGVACFQLIGIFL. The Cytoplasmic portion of the chain corresponds to 230-245; it reads AYCLSRAITNNQYEIV.

The protein belongs to the tetraspanin (TM4SF) family.

Its subcellular location is the membrane. The chain is Tetraspanin-6 (TSPAN6) from Bos taurus (Bovine).